The following is a 901-amino-acid chain: HTH-type transcriptional regulator MalT (901 aa).

39–46 (SPAGYGKT) contributes to the ATP binding site. Residues 829–894 (ELIRTSPLTQ…DAVQHAQQLL (66 aa)) enclose the HTH luxR-type domain. The H-T-H motif DNA-binding region spans 853 to 872 (NEQIAGELEVAATTIKTHIR).

Belongs to the MalT family. As to quaternary structure, monomer in solution. Oligomerizes to an active state in the presence of the positive effectors ATP and maltotriose.

With respect to regulation, activated by ATP and maltotriose, which are both required for DNA binding. Functionally, positively regulates the transcription of the maltose regulon whose gene products are responsible for uptake and catabolism of malto-oligosaccharides. Specifically binds to the promoter region of its target genes, recognizing a short DNA motif called the MalT box. The polypeptide is HTH-type transcriptional regulator MalT (Escherichia coli (strain ATCC 8739 / DSM 1576 / NBRC 3972 / NCIMB 8545 / WDCM 00012 / Crooks)).